The chain runs to 332 residues: Fructose-1,6-bisphosphatase class 1 (332 aa).

Residues E89, D110, L112, and D113 each coordinate Mg(2+). Substrate is bound by residues D113–S116, N206, Y239, Y257–Y259, and K269. Residue E275 coordinates Mg(2+).

It belongs to the FBPase class 1 family. Homotetramer. Requires Mg(2+) as cofactor.

The protein localises to the cytoplasm. It carries out the reaction beta-D-fructose 1,6-bisphosphate + H2O = beta-D-fructose 6-phosphate + phosphate. It functions in the pathway carbohydrate biosynthesis; gluconeogenesis. The sequence is that of Fructose-1,6-bisphosphatase class 1 from Klebsiella pneumoniae (strain 342).